A 292-amino-acid chain; its full sequence is Tricin synthase 2 (292 aa).

Residues 21 to 46 (RTTPASRVSSTAMAAANGDASHGANG) form a disordered region. Residues 23-32 (TPASRVSSTA) show a composition bias toward polar residues. S-adenosyl-L-methionine contacts are provided by residues serine 108, glutamate 130, 132-133 (GV), serine 138, aspartate 156, and alanine 185. Aspartate 208 contributes to the a divalent metal cation binding site. Aspartate 210 lines the S-adenosyl-L-methionine pocket. Residues aspartate 234 and asparagine 235 each contribute to the a divalent metal cation site.

It belongs to the class I-like SAM-binding methyltransferase superfamily. Cation-dependent O-methyltransferase family. CCoAMT subfamily. Mg(2+) is required as a cofactor. Mn(2+) serves as cofactor. Expressed in stems only.

It carries out the reaction tricetin + 2 S-adenosyl-L-methionine = 3',5'-di-O-methyltricetin + 2 S-adenosyl-L-homocysteine + 2 H(+). In terms of biological role, catalyzes the stepwise methylation of tricetin to its 3'-mono- and 3',5'-dimethyl ethers. No 3',4',5'-trimethylated ester derivatives are produced. Can use caffeoyl CoA, 5-hydroxyferulic acid, luteolin, tricetin, quercetin, myrcetin and 7,8-dihydroxyflavone as substrates, but not naringenin, apigenin or kaempferol. The 2,3-double bond and the O-dihydroxyl group of the substrate are both required for catalytic activity of the enzyme. This chain is Tricin synthase 2 (ROMT-17), found in Oryza sativa subsp. japonica (Rice).